We begin with the raw amino-acid sequence, 622 residues long: SLAIN motif-containing protein-like (622 aa).

Residues 34 to 60 (DLKEVQKLHELVKRLEIQNQQLKIKRN) are a coiled coil. 2 disordered regions span residues 404–441 (HRYS…IQNH) and 473–622 (VRSS…DGCY). The span at 405–415 (RYSPSPLSSPR) shows a compositional bias: low complexity. Composition is skewed to polar residues over residues 416 to 430 (CQSP…TTSR), 484 to 502 (QGPS…STPP), 525 to 591 (VSTS…STVP), and 599 to 611 (SRRS…MNST).

Belongs to the SLAIN motif-containing family.

The polypeptide is SLAIN motif-containing protein-like (Xenopus tropicalis (Western clawed frog)).